The sequence spans 343 residues: Phenylalanine--tRNA ligase alpha subunit (343 aa).

Mg(2+) is bound at residue E268.

The protein belongs to the class-II aminoacyl-tRNA synthetase family. Phe-tRNA synthetase alpha subunit type 1 subfamily. Tetramer of two alpha and two beta subunits. Mg(2+) serves as cofactor.

The protein localises to the cytoplasm. It catalyses the reaction tRNA(Phe) + L-phenylalanine + ATP = L-phenylalanyl-tRNA(Phe) + AMP + diphosphate + H(+). The chain is Phenylalanine--tRNA ligase alpha subunit from Cupriavidus necator (strain ATCC 17699 / DSM 428 / KCTC 22496 / NCIMB 10442 / H16 / Stanier 337) (Ralstonia eutropha).